Reading from the N-terminus, the 360-residue chain is Endolytic murein transglycosylase (360 aa).

A helical membrane pass occupies residues 16 to 36 (IILSSIVVLFLIIGGAFLYGK).

The protein belongs to the transglycosylase MltG family.

It is found in the cell membrane. It carries out the reaction a peptidoglycan chain = a peptidoglycan chain with N-acetyl-1,6-anhydromuramyl-[peptide] at the reducing end + a peptidoglycan chain with N-acetylglucosamine at the non-reducing end.. In terms of biological role, functions as a peptidoglycan terminase that cleaves nascent peptidoglycan strands endolytically to terminate their elongation. This is Endolytic murein transglycosylase from Bacillus subtilis (strain 168).